A 368-amino-acid chain; its full sequence is Probable dual-specificity RNA methyltransferase RlmN (368 aa).

Catalysis depends on Glu-109, which acts as the Proton acceptor. The region spanning 115–355 (YPDRVTMCIS…VTIRDTRGQE (241 aa)) is the Radical SAM core domain. A disulfide bridge connects residues Cys-122 and Cys-360. The [4Fe-4S] cluster site is built by Cys-129, Cys-133, and Cys-136. S-adenosyl-L-methionine is bound by residues 184–185 (GE), Ser-218, 241–243 (SLH), and Asn-317. Cys-360 functions as the S-methylcysteine intermediate in the catalytic mechanism.

Belongs to the radical SAM superfamily. RlmN family. [4Fe-4S] cluster serves as cofactor.

It localises to the cytoplasm. The enzyme catalyses adenosine(2503) in 23S rRNA + 2 reduced [2Fe-2S]-[ferredoxin] + 2 S-adenosyl-L-methionine = 2-methyladenosine(2503) in 23S rRNA + 5'-deoxyadenosine + L-methionine + 2 oxidized [2Fe-2S]-[ferredoxin] + S-adenosyl-L-homocysteine. The catalysed reaction is adenosine(37) in tRNA + 2 reduced [2Fe-2S]-[ferredoxin] + 2 S-adenosyl-L-methionine = 2-methyladenosine(37) in tRNA + 5'-deoxyadenosine + L-methionine + 2 oxidized [2Fe-2S]-[ferredoxin] + S-adenosyl-L-homocysteine. Specifically methylates position 2 of adenine 2503 in 23S rRNA and position 2 of adenine 37 in tRNAs. In Streptomyces coelicolor (strain ATCC BAA-471 / A3(2) / M145), this protein is Probable dual-specificity RNA methyltransferase RlmN.